The sequence spans 1366 residues: DNA-directed RNA polymerase subunit beta' (1366 aa).

The disordered stretch occupies residues 1–40 (MTSTSPKSRRSSGKGRKGSKKKGKQVSQIPPLSKTPPSFR). Residues 7 to 24 (KSRRSSGKGRKGSKKKGK) show a composition bias toward basic residues. Polar residues predominate over residues 25–38 (QVSQIPPLSKTPPS). 4 residues coordinate Zn(2+): C250, C317, C324, and C327. Residues 1299-1366 (TAAKSTSVLD…LQEEGLLADE (68 aa)) form a disordered region. The segment covering 1353–1366 (ALEGLQEEGLLADE) has biased composition (low complexity).

Belongs to the RNA polymerase beta' chain family. RpoC2 subfamily. In cyanobacteria the RNAP catalytic core is composed of 2 alpha, 1 beta, 1 beta', 1 gamma and 1 omega subunit. When a sigma factor is associated with the core the holoenzyme is formed, which can initiate transcription. It depends on Zn(2+) as a cofactor.

It carries out the reaction RNA(n) + a ribonucleoside 5'-triphosphate = RNA(n+1) + diphosphate. Its function is as follows. DNA-dependent RNA polymerase catalyzes the transcription of DNA into RNA using the four ribonucleoside triphosphates as substrates. The protein is DNA-directed RNA polymerase subunit beta' of Prochlorococcus marinus (strain MIT 9211).